The sequence spans 236 residues: Alpha-acetolactate decarboxylase (236 aa).

Belongs to the alpha-acetolactate decarboxylase family.

It carries out the reaction (2S)-2-acetolactate + H(+) = (R)-acetoin + CO2. It participates in polyol metabolism; (R,R)-butane-2,3-diol biosynthesis; (R,R)-butane-2,3-diol from pyruvate: step 2/3. Converts acetolactate into acetoin. The polypeptide is Alpha-acetolactate decarboxylase (aldB) (Lactococcus lactis subsp. lactis (strain IL1403) (Streptococcus lactis)).